We begin with the raw amino-acid sequence, 162 residues long: uncharacterized protein (162 aa).

This sequence belongs to the baculoviridae 19 kDa protein family.

This is an uncharacterized protein from Tortricidae (ClGV).